A 463-amino-acid chain; its full sequence is Argininosuccinate lyase (463 aa).

Belongs to the lyase 1 family. Argininosuccinate lyase subfamily.

Its subcellular location is the cytoplasm. It carries out the reaction 2-(N(omega)-L-arginino)succinate = fumarate + L-arginine. It functions in the pathway amino-acid biosynthesis; L-arginine biosynthesis; L-arginine from L-ornithine and carbamoyl phosphate: step 3/3. The sequence is that of Argininosuccinate lyase from Streptococcus pneumoniae (strain JJA).